The sequence spans 510 residues: Protein HGV2 (510 aa).

The segment at 95-227 (GVPEEDADGD…KENESEEDPD (133 aa)) is disordered. Residues 98 to 110 (EEDADGDSDQEQE) show a composition bias toward acidic residues. 2 stretches are compositionally biased toward basic and acidic residues: residues 111 to 129 (QFEK…REEV) and 142 to 199 (EERG…DKPV). Residues 204-217 (TEEPGTSGTSASSS) are compositionally biased toward low complexity. TPR repeat units lie at residues 260–293 (AQCH…QKDL) and 302–335 (AETY…LEAR). The disordered stretch occupies residues 391–510 (DGSPFRQASE…TPKKDAAKRR (120 aa)). A compositionally biased stretch (low complexity) spans 398–411 (ASEGESSSGLGAST). Short sequence motifs (nuclear localization signal) lie at residues 444–451 (VRRKRPSP) and 465–471 (SKKAKQE). Basic and acidic residues predominate over residues 459–471 (ESKENESKKAKQE).

Belongs to the NASP family. Embryo and larvae.

The protein localises to the nucleus. Its function is as follows. May function as a nucleosome assembly factor during rapid embryonic cell divisions. This Halocynthia roretzi (Sea squirt) protein is Protein HGV2 (HGV2).